Consider the following 209-residue polypeptide: Imidazole glycerol phosphate synthase subunit HisH (209 aa).

The Glutamine amidotransferase type-1 domain maps to 1–205 (MIAIIDYGMG…KGVVETWKSS (205 aa)). Residue C79 is the Nucleophile of the active site. Active-site residues include H180 and E182.

Heterodimer of HisH and HisF.

Its subcellular location is the cytoplasm. It carries out the reaction 5-[(5-phospho-1-deoxy-D-ribulos-1-ylimino)methylamino]-1-(5-phospho-beta-D-ribosyl)imidazole-4-carboxamide + L-glutamine = D-erythro-1-(imidazol-4-yl)glycerol 3-phosphate + 5-amino-1-(5-phospho-beta-D-ribosyl)imidazole-4-carboxamide + L-glutamate + H(+). The enzyme catalyses L-glutamine + H2O = L-glutamate + NH4(+). It functions in the pathway amino-acid biosynthesis; L-histidine biosynthesis; L-histidine from 5-phospho-alpha-D-ribose 1-diphosphate: step 5/9. IGPS catalyzes the conversion of PRFAR and glutamine to IGP, AICAR and glutamate. The HisH subunit catalyzes the hydrolysis of glutamine to glutamate and ammonia as part of the synthesis of IGP and AICAR. The resulting ammonia molecule is channeled to the active site of HisF. This is Imidazole glycerol phosphate synthase subunit HisH from Bacillus cereus (strain AH187).